The chain runs to 64 residues: Photosystem II reaction center protein J (64 aa).

A helical membrane pass occupies residues leucine 35–tyrosine 55.

It belongs to the PsbJ family. PSII is composed of 1 copy each of membrane proteins PsbA, PsbB, PsbC, PsbD, PsbE, PsbF, PsbH, PsbI, PsbJ, PsbK, PsbL, PsbM, PsbT, PsbX, PsbY, Psb30/Ycf12, peripheral proteins PsbO, CyanoQ (PsbQ), PsbU, PsbV and a large number of cofactors. It forms dimeric complexes.

It localises to the cellular thylakoid membrane. Its function is as follows. One of the components of the core complex of photosystem II (PSII). PSII is a light-driven water:plastoquinone oxidoreductase that uses light energy to abstract electrons from H(2)O, generating O(2) and a proton gradient subsequently used for ATP formation. It consists of a core antenna complex that captures photons, and an electron transfer chain that converts photonic excitation into a charge separation. The protein is Photosystem II reaction center protein J of Prochlorococcus marinus (strain MIT 9515).